The sequence spans 421 residues: MSDPRYCAEIISVGTELLLGNILNSNAQFLAEELAQLGIPHYFQTVVGDNRDRLQSAVKIAAERSGLLIFTGGLGPTPDDLTTETLAACFETPLAERPEVITDIEAKFARRGRVLTDNNRKQALLPVGAELLPNPSGTAPGMIWSPRSGLTLMTFPGVPAEMRRMWTETAVPWLHQNDWCRSILVSRLLRFWGISESALAEKVAPFFDLQNPTVAPYANNGEVKLRITAAAASEAEGVALIAPIEQELRAIAGRDCYGADNDSLASVVGALLHDRGQTLAVAESCTGGGLGQLITTIPGSSQWFWGGAIAYDNRVKQSLLNVSAETLAEAGAVSAVVAEQMAIGIQQRLGTTWGVSITGIAGPDGGTETKPVGLVYIGIAGPTGCFSVERRWGAERGRDWVRRLSAGEALDQLRRSLLNLT.

Belongs to the CinA family.

This chain is CinA-like protein, found in Synechococcus elongatus (strain ATCC 33912 / PCC 7942 / FACHB-805) (Anacystis nidulans R2).